The sequence spans 238 residues: Pyridoxine 5'-phosphate synthase (238 aa).

N7 lines the 3-amino-2-oxopropyl phosphate pocket. Residue 9–10 (DH) participates in 1-deoxy-D-xylulose 5-phosphate binding. Residue R18 coordinates 3-amino-2-oxopropyl phosphate. Catalysis depends on H43, which acts as the Proton acceptor. Residues R45 and H50 each contribute to the 1-deoxy-D-xylulose 5-phosphate site. Residue E70 is the Proton acceptor of the active site. T100 is a 1-deoxy-D-xylulose 5-phosphate binding site. The active-site Proton donor is the H190. Residues G191 and 212–213 (GH) contribute to the 3-amino-2-oxopropyl phosphate site.

The protein belongs to the PNP synthase family. As to quaternary structure, homooctamer; tetramer of dimers.

The protein localises to the cytoplasm. It carries out the reaction 3-amino-2-oxopropyl phosphate + 1-deoxy-D-xylulose 5-phosphate = pyridoxine 5'-phosphate + phosphate + 2 H2O + H(+). Its pathway is cofactor biosynthesis; pyridoxine 5'-phosphate biosynthesis; pyridoxine 5'-phosphate from D-erythrose 4-phosphate: step 5/5. In terms of biological role, catalyzes the complicated ring closure reaction between the two acyclic compounds 1-deoxy-D-xylulose-5-phosphate (DXP) and 3-amino-2-oxopropyl phosphate (1-amino-acetone-3-phosphate or AAP) to form pyridoxine 5'-phosphate (PNP) and inorganic phosphate. This Prochlorococcus marinus (strain MIT 9215) protein is Pyridoxine 5'-phosphate synthase.